A 241-amino-acid polypeptide reads, in one-letter code: tRNA pseudouridine synthase B (241 aa).

Asp52 serves as the catalytic Nucleophile.

This sequence belongs to the pseudouridine synthase TruB family. Type 1 subfamily.

The catalysed reaction is uridine(55) in tRNA = pseudouridine(55) in tRNA. In terms of biological role, responsible for synthesis of pseudouridine from uracil-55 in the psi GC loop of transfer RNAs. The sequence is that of tRNA pseudouridine synthase B from Chloroherpeton thalassium (strain ATCC 35110 / GB-78).